The primary structure comprises 519 residues: DNA damage-binding protein CMR1 (519 aa).

The disordered stretch occupies residues 35–92 (AEAGLGPTGKSRAAASSKPRVKKPAPKKIKQEDIAPRRTSSRLKGIEADSEKAKRKAE). The segment covering 53-62 (PRVKKPAPKK) has biased composition (basic residues). Over residues 78–92 (KGIEADSEKAKRKAE) the composition is skewed to basic and acidic residues. WD repeat units follow at residues 240–280 (PHTR…AVEV), 287–327 (NEDQ…DQAE), 331–371 (LSEK…GKGD), 380–420 (EHES…EWAT), 442–485 (GRWV…LAQL), and 488–519 (DGITAVPAVAKFHPTLDWVAAGTASGKLCLWM).

This sequence belongs to the WD repeat DDB2/WDR76 family.

Functionally, DNA-binding protein that binds to both single- and double-stranded DNA. Binds preferentially to UV-damaged DNA. May be involved in DNA-metabolic processes. In Phaeosphaeria nodorum (strain SN15 / ATCC MYA-4574 / FGSC 10173) (Glume blotch fungus), this protein is DNA damage-binding protein CMR1.